We begin with the raw amino-acid sequence, 1985 residues long: Non-reducing polyketide synthase ntnG (1985 aa).

Residues 7–243 (LLFGDQADAP…TILPAFGAVH (237 aa)) are N-terminal acylcarrier protein transacylase (SAT) domain. In terms of domain architecture, Ketosynthase family 3 (KS3) spans 364–792 (SGSVAIIGMS…GGNSCFVLEE (429 aa)). Active-site for beta-ketoacyl synthase activity residues include cysteine 536, histidine 671, and histidine 711. Residues 889–1148 (VFAFTGQGAH…VNFEQAISHC (260 aa)) form a malonyl-CoA:ACP transacylase (MAT) domain region. Catalysis depends on serine 980, which acts as the For acyl/malonyl transferase activity. The tract at residues 1261-1392 (HRLVKQEDTA…VRLRDEHAFD (132 aa)) is N-terminal hotdog fold. One can recognise a PKS/mFAS DH domain in the interval 1261 to 1567 (HRLVKQEDTA…FRKMPRTTLH (307 aa)). The segment at 1265–1566 (KQEDTAKEQH…RFRKMPRTTL (302 aa)) is product template (PT) domain. Histidine 1293 functions as the Proton acceptor; for dehydratase activity in the catalytic mechanism. Residues 1414–1567 (AGGRANRFQG…FRKMPRTTLH (154 aa)) are C-terminal hotdog fold. Aspartate 1479 acts as the Proton donor; for dehydratase activity in catalysis. Polar residues predominate over residues 1578 to 1605 (NTKQVPHPTTNGSAIANGVNRNPSHNEP). The disordered stretch occupies residues 1578–1622 (NTKQVPHPTTNGSAIANGVNRNPSHNEPSTPPVANGVNGTNGDQS). Positions 1622–1699 (SDRKSLYSVL…DAQRELRRLE (78 aa)) constitute a Carrier domain. Position 1659 is an O-(pantetheine 4'-phosphoryl)serine (serine 1659). The segment at 1719 to 1913 (TRECNVVLMQ…DCTFVIWAKK (195 aa)) is thioesterase (TE) domain.

The protein operates within secondary metabolite biosynthesis; terpenoid biosynthesis. Its function is as follows. Non-reducing polyketide synthase; part of the gene cluster that mediates the biosynthesis of the meroterpenoids nectripenoids A and B, as well as cochliquninone D and isocochliquninone E. The pathway probably begins with the HR-PKS ntnH that catalyzes two chain-extension steps to form a reduced triketide, which then primes the SAT domain in the NR-PKS ntnG to initiate three more cycles of extension to give a linear hexaketide corresponding to the polyketide part of nectripenoids. The FAD-dependent monooxygenase ntnJ then performs an oxidative decarboxylation at C11 of the ntnH/ntnG product, via an electrophilic aromatic hydroxylation with concomitant ipso-decarboxylation. The membrane-bound polyprenyl transferase ntnF then introduces a farnesyl group before the FAD-dependent monooxygenase ntnK functions as the first epoxidase on terminal C12'-C13' olefin, followed by a second epoxidation on C7'-C8' catalyzed by ntnA. The terpene cyclase/mutase ntnI then initiates the sequential tricyclic ring formation through protonation of the terminal epoxide and catalyzes the regioselective and stereoselective 6/6/6-tricyclic ring formation. The cytochrome P450 monooxygenase ntnM may then hydroxylate C1'. The chain is Non-reducing polyketide synthase ntnG from Nectria sp.